The primary structure comprises 192 residues: uncharacterized protein (192 aa).

The 132-residue stretch at 29–160 (HRQAAVLIPI…PLDIYRRGDS (132 aa)) folds into the Nudix hydrolase domain. The Nudix box motif lies at 67 to 89 (GAVDDTDASVIAAALREAEEEVA). Residues Glu83 and Glu87 each coordinate Mg(2+).

Belongs to the Nudix hydrolase family. PCD1 subfamily. Mn(2+) serves as cofactor. It depends on Mg(2+) as a cofactor.

Functionally, probably mediates the hydrolysis of some nucleoside diphosphate derivatives. This is an uncharacterized protein from Shigella flexneri.